A 258-amino-acid chain; its full sequence is Imidazole glycerol phosphate synthase subunit HisF (258 aa).

Catalysis depends on residues aspartate 11 and aspartate 130.

This sequence belongs to the HisA/HisF family. Heterodimer of HisH and HisF.

The protein localises to the cytoplasm. The enzyme catalyses 5-[(5-phospho-1-deoxy-D-ribulos-1-ylimino)methylamino]-1-(5-phospho-beta-D-ribosyl)imidazole-4-carboxamide + L-glutamine = D-erythro-1-(imidazol-4-yl)glycerol 3-phosphate + 5-amino-1-(5-phospho-beta-D-ribosyl)imidazole-4-carboxamide + L-glutamate + H(+). Its pathway is amino-acid biosynthesis; L-histidine biosynthesis; L-histidine from 5-phospho-alpha-D-ribose 1-diphosphate: step 5/9. Its function is as follows. IGPS catalyzes the conversion of PRFAR and glutamine to IGP, AICAR and glutamate. The HisF subunit catalyzes the cyclization activity that produces IGP and AICAR from PRFAR using the ammonia provided by the HisH subunit. This Yersinia pestis (strain Pestoides F) protein is Imidazole glycerol phosphate synthase subunit HisF.